Reading from the N-terminus, the 341-residue chain is Holliday junction branch migration complex subunit RuvB (341 aa).

Residues 1-182 (MKDRLISAVA…FGVISRLEYY (182 aa)) form a large ATPase domain (RuvB-L) region. ATP-binding positions include L21, R22, G63, K66, T67, T68, 129 to 131 (EDY), R172, Y182, and R219. Residue T67 participates in Mg(2+) binding. The interval 183–253 (RPEDLVLIVN…VAVEALKFLE (71 aa)) is small ATPAse domain (RuvB-S). The head domain (RuvB-H) stretch occupies residues 256–341 (PLGLDFADRR…REETDQVSLW (86 aa)). DNA is bound by residues R311 and R316.

Belongs to the RuvB family. In terms of assembly, homohexamer. Forms an RuvA(8)-RuvB(12)-Holliday junction (HJ) complex. HJ DNA is sandwiched between 2 RuvA tetramers; dsDNA enters through RuvA and exits via RuvB. An RuvB hexamer assembles on each DNA strand where it exits the tetramer. Each RuvB hexamer is contacted by two RuvA subunits (via domain III) on 2 adjacent RuvB subunits; this complex drives branch migration. In the full resolvosome a probable DNA-RuvA(4)-RuvB(12)-RuvC(2) complex forms which resolves the HJ.

It localises to the cytoplasm. The enzyme catalyses ATP + H2O = ADP + phosphate + H(+). In terms of biological role, the RuvA-RuvB-RuvC complex processes Holliday junction (HJ) DNA during genetic recombination and DNA repair, while the RuvA-RuvB complex plays an important role in the rescue of blocked DNA replication forks via replication fork reversal (RFR). RuvA specifically binds to HJ cruciform DNA, conferring on it an open structure. The RuvB hexamer acts as an ATP-dependent pump, pulling dsDNA into and through the RuvAB complex. RuvB forms 2 homohexamers on either side of HJ DNA bound by 1 or 2 RuvA tetramers; 4 subunits per hexamer contact DNA at a time. Coordinated motions by a converter formed by DNA-disengaged RuvB subunits stimulates ATP hydrolysis and nucleotide exchange. Immobilization of the converter enables RuvB to convert the ATP-contained energy into a lever motion, pulling 2 nucleotides of DNA out of the RuvA tetramer per ATP hydrolyzed, thus driving DNA branch migration. The RuvB motors rotate together with the DNA substrate, which together with the progressing nucleotide cycle form the mechanistic basis for DNA recombination by continuous HJ branch migration. Branch migration allows RuvC to scan DNA until it finds its consensus sequence, where it cleaves and resolves cruciform DNA. The polypeptide is Holliday junction branch migration complex subunit RuvB (Pelotomaculum thermopropionicum (strain DSM 13744 / JCM 10971 / SI)).